Reading from the N-terminus, the 185-residue chain is Elongation factor P (185 aa).

The protein belongs to the elongation factor P family.

It localises to the cytoplasm. Its pathway is protein biosynthesis; polypeptide chain elongation. Its function is as follows. Involved in peptide bond synthesis. Stimulates efficient translation and peptide-bond synthesis on native or reconstituted 70S ribosomes in vitro. Probably functions indirectly by altering the affinity of the ribosome for aminoacyl-tRNA, thus increasing their reactivity as acceptors for peptidyl transferase. This chain is Elongation factor P, found in Paraburkholderia phytofirmans (strain DSM 17436 / LMG 22146 / PsJN) (Burkholderia phytofirmans).